Reading from the N-terminus, the 155-residue chain is 6,7-dimethyl-8-ribityllumazine synthase (155 aa).

Residues Phe24, 58 to 60 (AFE), and 82 to 84 (VII) contribute to the 5-amino-6-(D-ribitylamino)uracil site. 87–88 (ST) is a binding site for (2S)-2-hydroxy-3-oxobutyl phosphate. His90 acts as the Proton donor in catalysis. Phe115 is a binding site for 5-amino-6-(D-ribitylamino)uracil. Residue Arg129 coordinates (2S)-2-hydroxy-3-oxobutyl phosphate.

It belongs to the DMRL synthase family.

The enzyme catalyses (2S)-2-hydroxy-3-oxobutyl phosphate + 5-amino-6-(D-ribitylamino)uracil = 6,7-dimethyl-8-(1-D-ribityl)lumazine + phosphate + 2 H2O + H(+). It functions in the pathway cofactor biosynthesis; riboflavin biosynthesis; riboflavin from 2-hydroxy-3-oxobutyl phosphate and 5-amino-6-(D-ribitylamino)uracil: step 1/2. In terms of biological role, catalyzes the formation of 6,7-dimethyl-8-ribityllumazine by condensation of 5-amino-6-(D-ribitylamino)uracil with 3,4-dihydroxy-2-butanone 4-phosphate. This is the penultimate step in the biosynthesis of riboflavin. In Pelodictyon phaeoclathratiforme (strain DSM 5477 / BU-1), this protein is 6,7-dimethyl-8-ribityllumazine synthase.